The sequence spans 567 residues: Proline--tRNA ligase (567 aa).

Belongs to the class-II aminoacyl-tRNA synthetase family. ProS type 1 subfamily. As to quaternary structure, homodimer.

It is found in the cytoplasm. The catalysed reaction is tRNA(Pro) + L-proline + ATP = L-prolyl-tRNA(Pro) + AMP + diphosphate. Functionally, catalyzes the attachment of proline to tRNA(Pro) in a two-step reaction: proline is first activated by ATP to form Pro-AMP and then transferred to the acceptor end of tRNA(Pro). As ProRS can inadvertently accommodate and process non-cognate amino acids such as alanine and cysteine, to avoid such errors it has two additional distinct editing activities against alanine. One activity is designated as 'pretransfer' editing and involves the tRNA(Pro)-independent hydrolysis of activated Ala-AMP. The other activity is designated 'posttransfer' editing and involves deacylation of mischarged Ala-tRNA(Pro). The misacylated Cys-tRNA(Pro) is not edited by ProRS. The sequence is that of Proline--tRNA ligase from Idiomarina loihiensis (strain ATCC BAA-735 / DSM 15497 / L2-TR).